We begin with the raw amino-acid sequence, 206 residues long: Sortase A (206 aa).

Over 1–6 the chain is Cytoplasmic; it reads MKKWTN. A helical transmembrane segment spans residues 7 to 24; it reads RLMTIAGVVLILVAAYLF. Residues 25–206 are Extracellular-facing; sequence AKPHIDNYLH…RKIFVATEVK (182 aa). The interval 49 to 69 is disordered; that stretch reads VKEQASKDKKQQAKPQIPKDK. Ca(2+) is bound by residues Glu105, Glu108, Asp112, and Asn114. Catalysis depends on His120, which acts as the Proton donor/acceptor. Glu171 is a Ca(2+) binding site. The active-site Acyl-thioester intermediate is Cys184.

This sequence belongs to the bacterial sortase family. Class A subfamily. In terms of assembly, monomer and homodimer; in equilibrium.

The protein resides in the cell membrane. It carries out the reaction The enzyme catalyzes a cell wall sorting reaction in which a surface protein with a sorting signal containing a LPXTG motif is cleaved between the Thr and Gly residue. The resulting threonine carboxyl end of the protein is covalently attached to a pentaglycine cross-bridge of peptidoglycan.. With respect to regulation, sortase activity is regulated by monomer-homodimer equilibrium. Mutant cells with monomeric SrtA display more adhesive proteins on the cell surface and are more invasive than wild-type cells, which have majority of SrtA in dimeric form. Dimerization may suppress the enzymatic activity on cell membranes. Stimulated by calcium ions, which promote substrate binding. Calcium ions bind to SrtA and modulate both the structure and dynamics of a large active site loop. Can also be stimulated, to a lesser extent, by Mg(2+) and Mn(2+). Inhibited by sulfhydryl-modifying reagents. Transpeptidase that anchors surface proteins to the cell wall. Recognizes and modifies its substrate by proteolytic cleavage of a C-terminal sorting signal. Following cleavage, a covalent intermediate is formed via a thioester bond between the sortase and its substrate, which is then transferred and covalently attached to the cell wall. This sortase recognizes a Leu-Pro-x-Thr-Gly (LPXTG) motif, which is cleaved by the sortase between the threonine and glycine residues. Utilizes lipid II as the peptidoglycan substrate for the sorting reaction. Responsible for the display of important virulence factors. Important for interactions with the host and host colonization during infection. The chain is Sortase A from Staphylococcus aureus (strain NCTC 8325 / PS 47).